The primary structure comprises 92 residues: MTINLKVKQEKRKGLSINDIQDGYFILRNDDVWIVKMDVTNRNKIHLIDLETFHVKTVSTKNDLKSLFEDWSRIKILSPKQVNLNIGFQWKE.

This Bacillus subtilis (strain 168) protein is SPbeta prophage-derived uncharacterized protein YopY (yopY).